The sequence spans 217 residues: Adenylate kinase (217 aa).

10 to 15 lines the ATP pocket; the sequence is GAGKGT. The NMP stretch occupies residues 30–59; it reads STGDMLRAAIREGTELGLKAKSVMESGGLV. Residues Thr31, Arg36, 57-59, 85-88, and Gln92 each bind AMP; these read GLV and GFPR. Positions 122-159 are LID; it reads GRRQHPASGRVYHVVYNPPKVEGKDDETGEDLVQRPDD. Residues Arg123 and 132–133 each bind ATP; that span reads VY. AMP is bound by residues Arg156 and Arg167. Arg202 lines the ATP pocket.

Belongs to the adenylate kinase family. In terms of assembly, monomer.

Its subcellular location is the cytoplasm. It carries out the reaction AMP + ATP = 2 ADP. It functions in the pathway purine metabolism; AMP biosynthesis via salvage pathway; AMP from ADP: step 1/1. Its function is as follows. Catalyzes the reversible transfer of the terminal phosphate group between ATP and AMP. Plays an important role in cellular energy homeostasis and in adenine nucleotide metabolism. This chain is Adenylate kinase, found in Acinetobacter baumannii (strain AB307-0294).